Consider the following 212-residue polypeptide: Protein-L-isoaspartate O-methyltransferase (212 aa).

Serine 60 is a catalytic residue.

The protein belongs to the methyltransferase superfamily. L-isoaspartyl/D-aspartyl protein methyltransferase family.

The protein resides in the cytoplasm. The catalysed reaction is [protein]-L-isoaspartate + S-adenosyl-L-methionine = [protein]-L-isoaspartate alpha-methyl ester + S-adenosyl-L-homocysteine. In terms of biological role, catalyzes the methyl esterification of L-isoaspartyl residues in peptides and proteins that result from spontaneous decomposition of normal L-aspartyl and L-asparaginyl residues. It plays a role in the repair and/or degradation of damaged proteins. The sequence is that of Protein-L-isoaspartate O-methyltransferase from Methanococcus maripaludis (strain C5 / ATCC BAA-1333).